A 284-amino-acid polypeptide reads, in one-letter code: D-tagatose-1,6-bisphosphate aldolase subunit GatY (284 aa).

Asp82 (proton donor) is an active-site residue. Residues His83 and His180 each coordinate Zn(2+). Dihydroxyacetone phosphate is bound at residue Gly181. His208 provides a ligand contact to Zn(2+). Dihydroxyacetone phosphate is bound by residues Gly209–Ser211 and Asn230–Thr233.

Belongs to the class II fructose-bisphosphate aldolase family. TagBP aldolase GatY subfamily. As to quaternary structure, forms a complex with GatZ. It depends on Zn(2+) as a cofactor.

It catalyses the reaction D-tagatofuranose 1,6-bisphosphate = D-glyceraldehyde 3-phosphate + dihydroxyacetone phosphate. Its pathway is carbohydrate metabolism; D-tagatose 6-phosphate degradation; D-glyceraldehyde 3-phosphate and glycerone phosphate from D-tagatose 6-phosphate: step 2/2. Functionally, catalytic subunit of the tagatose-1,6-bisphosphate aldolase GatYZ, which catalyzes the reversible aldol condensation of dihydroxyacetone phosphate (DHAP or glycerone-phosphate) with glyceraldehyde 3-phosphate (G3P) to produce tagatose 1,6-bisphosphate (TBP). Requires GatZ subunit for full activity and stability. Is involved in the catabolism of galactitol. The polypeptide is D-tagatose-1,6-bisphosphate aldolase subunit GatY (Salmonella newport (strain SL254)).